The sequence spans 235 residues: Protein GrpE (235 aa).

Composition is skewed to basic and acidic residues over residues 1-16 (MENK…HEKN) and 24-35 (NNVKKENLHEDQ). The segment at 1–51 (MENKNQKHNNEFHEKNQQSQKDNNNVKKENLHEDQSDLNDANFDDGGKKNK) is disordered.

This sequence belongs to the GrpE family. In terms of assembly, homodimer.

It is found in the cytoplasm. Functionally, participates actively in the response to hyperosmotic and heat shock by preventing the aggregation of stress-denatured proteins, in association with DnaK and GrpE. It is the nucleotide exchange factor for DnaK and may function as a thermosensor. Unfolded proteins bind initially to DnaJ; upon interaction with the DnaJ-bound protein, DnaK hydrolyzes its bound ATP, resulting in the formation of a stable complex. GrpE releases ADP from DnaK; ATP binding to DnaK triggers the release of the substrate protein, thus completing the reaction cycle. Several rounds of ATP-dependent interactions between DnaJ, DnaK and GrpE are required for fully efficient folding. The polypeptide is Protein GrpE (Malacoplasma penetrans (strain HF-2) (Mycoplasma penetrans)).